The sequence spans 397 residues: LIM/homeobox protein Lhx9 (397 aa).

LIM zinc-binding domains lie at 69-130 (ALCA…RFSV) and 131-193 (QRCA…LLQG). 3 disordered regions span residues 248-272 (ENEA…RMRT), 330-364 (ENGG…TLTD), and 378-397 (SNMD…TNLF). The segment at residues 267–326 (TKRMRTSFKHHQLRTMKSYFAINHNPDAKDLKQLAQKTGLTKRVLQVWFQNARAKFRRNL) is a DNA-binding region (homeobox). The segment covering 353 to 364 (LTPPGTATTLTD) has biased composition (low complexity).

Interacts with LDB1 and LDB2.

Its subcellular location is the nucleus. Its function is as follows. Involved in gonadal development. This chain is LIM/homeobox protein Lhx9 (LHX9), found in Homo sapiens (Human).